The primary structure comprises 103 residues: Small ribosomal subunit protein uS10 (103 aa).

Belongs to the universal ribosomal protein uS10 family. Part of the 30S ribosomal subunit.

Functionally, involved in the binding of tRNA to the ribosomes. This Acetivibrio thermocellus (strain ATCC 27405 / DSM 1237 / JCM 9322 / NBRC 103400 / NCIMB 10682 / NRRL B-4536 / VPI 7372) (Clostridium thermocellum) protein is Small ribosomal subunit protein uS10.